The primary structure comprises 249 residues: 2,3-bisphosphoglycerate-dependent phosphoglycerate mutase (249 aa).

Residues 7 to 14, 20 to 21, Arg-59, 86 to 89, Lys-97, 113 to 114, and 182 to 183 each bind substrate; these read RHGESEWN, TG, ERHY, RR, and GN. His-8 functions as the Tele-phosphohistidine intermediate in the catalytic mechanism. Glu-86 functions as the Proton donor/acceptor in the catalytic mechanism.

Belongs to the phosphoglycerate mutase family. BPG-dependent PGAM subfamily.

The enzyme catalyses (2R)-2-phosphoglycerate = (2R)-3-phosphoglycerate. The protein operates within carbohydrate degradation; glycolysis; pyruvate from D-glyceraldehyde 3-phosphate: step 3/5. In terms of biological role, catalyzes the interconversion of 2-phosphoglycerate and 3-phosphoglycerate. The chain is 2,3-bisphosphoglycerate-dependent phosphoglycerate mutase from Lachnoclostridium phytofermentans (strain ATCC 700394 / DSM 18823 / ISDg) (Clostridium phytofermentans).